We begin with the raw amino-acid sequence, 407 residues long: Probable NADPH dehydrogenase (407 aa).

2 residues coordinate FMN: T49 and Q124. Residue Y206 is the Proton donor of the active site. FMN-binding residues include R254 and R357.

Belongs to the NADH:flavin oxidoreductase/NADH oxidase family. FMN is required as a cofactor.

It catalyses the reaction A + NADPH + H(+) = AH2 + NADP(+). Oxidoreductase that binds mammalian estrogens with high affinity. This Candida albicans (strain SC5314 / ATCC MYA-2876) (Yeast) protein is Probable NADPH dehydrogenase.